Here is a 617-residue protein sequence, read N- to C-terminus: Hemagglutinin glycoprotein (617 aa).

Over methionine 1–valine 37 the chain is Intravirion. Residues methionine 1–cysteine 154 form a stalk region. Residues leucine 38–isoleucine 58 form a helical; Signal-anchor for type II membrane protein membrane-spanning segment. At arginine 59–arginine 617 the chain is on the virion surface side. 5 N-linked (GlcNAc...) asparagine; by host glycosylation sites follow: asparagine 168, asparagine 187, asparagine 200, asparagine 215, and asparagine 238. 5 disulfides stabilise this stretch: cysteine 188-cysteine 606, cysteine 287-cysteine 300, cysteine 381-cysteine 494, cysteine 386-cysteine 394, and cysteine 570-cysteine 579. The interaction with host NECTIN4 receptor stretch occupies residues proline 458–tyrosine 543.

The protein belongs to the paramyxoviruses hemagglutinin-neuraminidase family. Non-sialidase subfamily. In terms of assembly, homodimer; disulfide-linked. Further forms homotetramer (dimer of dimers). Interacts (via C-terminus) with human NECTIN4 (via N-terminus); this interaction allows attachment to the respiratory epithelium and viral entry. Interacts (via C-terminus) with human SLAMF1/CD150 (via N-terminus); this interaction allows attachment and viral entry into the CD150-expressing immune cells. Interacts with human CD46 antigen; this interaction allows attachment and viral entry of vaccine and laboratory-adapted strains.

The protein localises to the virion membrane. Its subcellular location is the host cell membrane. In terms of biological role, attaches the virus to the human SLAMF1/CD150 receptor for entry into host dendritic cells, macrophages, activated memory T cells and naive or memory B cells, thereby explaining the long immunosuppression that follows infection. In the respiratory airways, binds to the NECTIN4 receptor for entry into the host cell. Binding of H protein to the receptor induces a conformational change that allows the F protein to trigger virion/cell membranes fusion. The vaccine and laboratory-adapted strains use host CD46 as an alternate receptor. The high degree of interaction between H and CD46 results in down-regulation of the latter from the surface of infected cells, rendering them more sensitive to c3b-mediated complement lysis. The polypeptide is Hemagglutinin glycoprotein (H) (Homo sapiens (Human)).